The chain runs to 418 residues: Gamma-glutamyl phosphate reductase (418 aa).

The protein belongs to the gamma-glutamyl phosphate reductase family.

It is found in the cytoplasm. The catalysed reaction is L-glutamate 5-semialdehyde + phosphate + NADP(+) = L-glutamyl 5-phosphate + NADPH + H(+). Its pathway is amino-acid biosynthesis; L-proline biosynthesis; L-glutamate 5-semialdehyde from L-glutamate: step 2/2. Catalyzes the NADPH-dependent reduction of L-glutamate 5-phosphate into L-glutamate 5-semialdehyde and phosphate. The product spontaneously undergoes cyclization to form 1-pyrroline-5-carboxylate. In Aliivibrio fischeri (strain MJ11) (Vibrio fischeri), this protein is Gamma-glutamyl phosphate reductase.